Consider the following 296-residue polypeptide: (3R)-3-[(carboxymethyl)amino]fatty acid oxygenase/decarboxylase (296 aa).

3 residues coordinate (3R)-3-[(carboxymethyl)amino]butanoate: Y66, Y71, and G98. (3R)-3-{[carboxy(hydroxy)methyl]amino}butanoate contacts are provided by Y66, Y71, and G98. Residues H102 and D104 each contribute to the Fe(2+) site. Y105 and K163 together coordinate (3R)-3-[(carboxymethyl)amino]butanoate. Positions 105 and 163 each coordinate (3R)-3-{[carboxy(hydroxy)methyl]amino}butanoate. H265 lines the Fe(2+) pocket. Position 269 (H269) interacts with 2-oxoglutarate. Position 280 (R280) interacts with (3R)-3-[(carboxymethyl)amino]butanoate. R280 contributes to the (3R)-3-{[carboxy(hydroxy)methyl]amino}butanoate binding site.

The protein belongs to the TfdA dioxygenase family. Fe(2+) is required as a cofactor.

It carries out the reaction a (3R)-3-[(carboxymethyl)amino]fatty acid + 2 2-oxoglutarate + 2 O2 = a (3R)-3-isocyanyl-fatty acid + 2 succinate + 3 CO2 + 2 H2O. The enzyme catalyses a (3R)-3-[(carboxymethyl)amino]fatty acid + 2-oxoglutarate + O2 = a (3R)-3-{[carboxy(hydroxy)methyl]amino}fatty acid + succinate + CO2. The catalysed reaction is a (3R)-3-{[carboxy(hydroxy)methyl]amino}fatty acid + 2-oxoglutarate + O2 = a (3R)-3-isocyanyl-fatty acid + succinate + 2 CO2 + 2 H2O. It catalyses the reaction (3R)-3-[(carboxymethyl)amino]butanoate + 2 2-oxoglutarate + 2 O2 = (3R)-3-isocyanylbutanoate + 2 succinate + 3 CO2 + 2 H2O. It carries out the reaction (3R)-3-[(carboxymethyl)amino]butanoate + 2-oxoglutarate + O2 = (3R)-3-{[carboxy(hydroxy)methyl]amino}butanoate + succinate + CO2. The enzyme catalyses (3R)-3-{[carboxy(hydroxy)methyl]amino}butanoate + 2-oxoglutarate + O2 = (3R)-3-isocyanylbutanoate + succinate + 2 CO2 + 2 H2O. Its function is as follows. Involved in the biosynthesis of a unique class of isonitrile lipopeptides (INLPs). Catalyzes the conversion of (3R)-3-[(carboxymethyl)amino]fatty acids such as (3R)-3-[(carboxymethyl)amino]butanoate (CABA) to (3R)-3-isocyanylbutanoate (INBA) through an oxidative decarboxylation mechanism, thereby generating the isonitrile group of INLPs. The chain is (3R)-3-[(carboxymethyl)amino]fatty acid oxygenase/decarboxylase from Streptomyces coeruleorubidus.